The chain runs to 343 residues: S-adenosylmethionine:tRNA ribosyltransferase-isomerase (343 aa).

It belongs to the QueA family. Monomer.

The protein resides in the cytoplasm. The enzyme catalyses 7-aminomethyl-7-carbaguanosine(34) in tRNA + S-adenosyl-L-methionine = epoxyqueuosine(34) in tRNA + adenine + L-methionine + 2 H(+). Its pathway is tRNA modification; tRNA-queuosine biosynthesis. In terms of biological role, transfers and isomerizes the ribose moiety from AdoMet to the 7-aminomethyl group of 7-deazaguanine (preQ1-tRNA) to give epoxyqueuosine (oQ-tRNA). The polypeptide is S-adenosylmethionine:tRNA ribosyltransferase-isomerase (Borreliella burgdorferi (strain ATCC 35210 / DSM 4680 / CIP 102532 / B31) (Borrelia burgdorferi)).